The sequence spans 575 residues: MNQTRVFLIFAWLMVAALLWMEWGKDKAAANAPTPIASQAVPAARDPDAAAPAANVPSAQAIPQAGSPAAVPGTSTTTATATPVAAGAAPAITLTSDVLRLKLDGRSVLDAELLQFPQTKDGTEPVKLLTEDAAHPYNATSGWASERSPVPGVGGFRAEQPGTTFELAKGQNTLVVPFVWNGPNGVSIRRIFTLQRGSYAISIKDEVINKSDAAWNGYVFRKLSRVPTILSRGMTNPDSFSFNGATWYSPQEGYERRAFKDYMDDGGLNRQITGGWVALLQHHFFTAWIPQKDQASLYVLAQDGPRDVAELRGPAFTVAPGQSASTEARLWVGPKLVSLLAKEDVKGLDRVVDYSRFSIMAIIGQGLFWVLSHLHSFLHNWGWAIIGLVLLLRLALYPLSAAQYKSGAKMRRFQPRLAQLKERYGDDRQKYQQATMELFKKEKINPMGGCLPLLIQMPIFFALYWVLVESVELRQAPWLGWIQDLTARDPYFILPVLNIAIMWATQKLTPTPGMDPMQAKMMQFMPLVFGVMMAFMPAGLVLYWVVNGGLGLLIQWWMIRQHGEKPSKIIQANAK.

Helical transmembrane passes span 6–26, 357–377, 381–401, 448–468, 490–510, and 526–546; these read VFLIFAWLMVAALLWMEWGKD, FSIMAIIGQGLFWVLSHLHSF, WGWAIIGLVLLLRLALYPLSA, GGCLPLLIQMPIFFALYWVLV, PYFILPVLNIAIMWATQKLTP, and PLVFGVMMAFMPAGLVLYWVV.

Belongs to the OXA1/ALB3/YidC family. Type 1 subfamily. In terms of assembly, interacts with the Sec translocase complex via SecD. Specifically interacts with transmembrane segments of nascent integral membrane proteins during membrane integration.

It localises to the cell inner membrane. Its function is as follows. Required for the insertion and/or proper folding and/or complex formation of integral membrane proteins into the membrane. Involved in integration of membrane proteins that insert both dependently and independently of the Sec translocase complex, as well as at least some lipoproteins. Aids folding of multispanning membrane proteins. The polypeptide is Membrane protein insertase YidC (Xanthomonas campestris pv. campestris (strain B100)).